The primary structure comprises 461 residues: Cysteine--tRNA ligase (461 aa).

Residue cysteine 28 coordinates Zn(2+). Positions 30-40 (ITVYDLCHIGH) match the 'HIGH' region motif. Zn(2+) contacts are provided by cysteine 209, histidine 234, and glutamate 238. The 'KMSKS' region motif lies at 266–270 (KMSKS). Lysine 269 serves as a coordination point for ATP.

It belongs to the class-I aminoacyl-tRNA synthetase family. In terms of assembly, monomer. Zn(2+) serves as cofactor.

It is found in the cytoplasm. It carries out the reaction tRNA(Cys) + L-cysteine + ATP = L-cysteinyl-tRNA(Cys) + AMP + diphosphate. This chain is Cysteine--tRNA ligase, found in Enterobacter sp. (strain 638).